The primary structure comprises 359 residues: 3-dehydroshikimate dehydratase (359 aa).

It belongs to the bacterial two-domain DSD family. In terms of assembly, monomer.

It carries out the reaction 3-dehydroshikimate = 3,4-dihydroxybenzoate + H2O. It participates in aromatic compound metabolism; 3,4-dihydroxybenzoate biosynthesis; 3,4-dihydroxybenzoate from 3-dehydroquinate: step 2/2. Divalent cations such as Mg(2+), but also MO(2+), Mn(2+), Ba(2+), and Co(2+) activate the enzyme, whereas monovalent cations as K(+), Na(+), and NH4(+) decrease its activity slightly. 3-dehydroshikimate dehydratase; part of the qa gene cluster that mediates the catabolism of quinic acid (QA) and as such, allows the use of QA as a sole carbon source. Catalyzes the third reaction in the inducible quinic acid catabolic pathway by converting dehydroshikimate to protocatechuate. The qa cluster encodes 3 inducible enymes (qa-2, qa-3 and qa-4) catalyzing the first three reactions in the catabolism of quinic acid to protocatechuic acid (also known as 3,4-Dihydroxybenzoic acid). This Neurospora crassa (strain ATCC 24698 / 74-OR23-1A / CBS 708.71 / DSM 1257 / FGSC 987) protein is 3-dehydroshikimate dehydratase.